The chain runs to 101 residues: Class II hydrophobin 5 (101 aa).

A signal peptide spans 1 to 15 (MQLTALLALATLAIA). 4 cysteine pairs are disulfide-bonded: Cys-33–Cys-83, Cys-44–Cys-74, Cys-45–Cys-57, and Cys-84–Cys-95.

It belongs to the cerato-ulmin hydrophobin family. In terms of assembly, homodimer. Homodimers further self-assemble to form highly ordered films at water-air interfaces through intermolecular interactions.

The protein resides in the secreted. It is found in the cell wall. In terms of biological role, aerial growth, conidiation, and dispersal of filamentous fungi in the environment rely upon a capability of their secreting small amphipathic proteins called hydrophobins (HPBs) with low sequence identity. Class I can self-assemble into an outermost layer of rodlet bundles on aerial cell surfaces, conferring cellular hydrophobicity that supports fungal growth, development and dispersal; whereas Class II form highly ordered films at water-air interfaces through intermolecular interactions but contribute nothing to the rodlet structure. The chain is Class II hydrophobin 5 from Trichoderma asperellum (strain ATCC 204424 / CBS 433.97 / NBRC 101777).